The following is a 201-amino-acid chain: 3-isopropylmalate dehydratase small subunit (201 aa).

This sequence belongs to the LeuD family. LeuD type 1 subfamily. As to quaternary structure, heterodimer of LeuC and LeuD.

It catalyses the reaction (2R,3S)-3-isopropylmalate = (2S)-2-isopropylmalate. The protein operates within amino-acid biosynthesis; L-leucine biosynthesis; L-leucine from 3-methyl-2-oxobutanoate: step 2/4. Its function is as follows. Catalyzes the isomerization between 2-isopropylmalate and 3-isopropylmalate, via the formation of 2-isopropylmaleate. The polypeptide is 3-isopropylmalate dehydratase small subunit (Kineococcus radiotolerans (strain ATCC BAA-149 / DSM 14245 / SRS30216)).